Reading from the N-terminus, the 66-residue chain is Large ribosomal subunit protein bL35 (66 aa).

Belongs to the bacterial ribosomal protein bL35 family.

The polypeptide is Large ribosomal subunit protein bL35 (Treponema pallidum (strain Nichols)).